A 430-amino-acid chain; its full sequence is RNA-binding protein 34 (430 aa).

Disordered stretches follow at residues 1–55 (MALE…GTGR), 72–123 (VPVP…ADRE), and 134–153 (EIHQ…VKVA). Phosphoserine occurs at positions 14, 28, and 99. Positions 23–34 (DGVRGSPPEDYR) are enriched in basic and acidic residues. Positions 113–123 (TNAEKKLADRE) are enriched in basic and acidic residues. An N6-acetyllysine modification is found at K151. RRM domains follow at residues 185–280 (RTVF…LASE) and 287–364 (RSVF…RSVN). Residue K242 forms a Glycyl lysine isopeptide (Lys-Gly) (interchain with G-Cter in SUMO2) linkage. S288 bears the Phosphoserine mark. 2 disordered regions span residues 365–395 (KEKF…KTAE) and 411–430 (KTKK…RKQK).

The protein belongs to the RRM RBM34 family.

It is found in the nucleus. The protein localises to the nucleolus. The sequence is that of RNA-binding protein 34 (RBM34) from Homo sapiens (Human).